The sequence spans 172 residues: Putative phosphoesterase BcerKBAB4_1135 (172 aa).

H34 serves as the catalytic Proton donor. Short sequence motifs (HXTX) lie at residues 34–37 and 115–118; these read HITL and HLTI. H115 functions as the Proton acceptor in the catalytic mechanism.

Belongs to the 2H phosphoesterase superfamily. YjcG family.

The polypeptide is Putative phosphoesterase BcerKBAB4_1135 (Bacillus mycoides (strain KBAB4) (Bacillus weihenstephanensis)).